The primary structure comprises 166 residues: Phosphopantetheine adenylyltransferase (166 aa).

Serine 11 is a binding site for substrate. ATP-binding positions include serine 11–phenylalanine 12 and histidine 19. Lysine 43, alanine 76, and arginine 90 together coordinate substrate. ATP is bound by residues glycine 91–arginine 93, glutamate 101, and leucine 126–serine 132.

Belongs to the bacterial CoaD family. In terms of assembly, homohexamer. Mg(2+) is required as a cofactor.

Its subcellular location is the cytoplasm. It carries out the reaction (R)-4'-phosphopantetheine + ATP + H(+) = 3'-dephospho-CoA + diphosphate. The protein operates within cofactor biosynthesis; coenzyme A biosynthesis; CoA from (R)-pantothenate: step 4/5. Reversibly transfers an adenylyl group from ATP to 4'-phosphopantetheine, yielding dephospho-CoA (dPCoA) and pyrophosphate. This Streptococcus equi subsp. zooepidemicus (strain H70) protein is Phosphopantetheine adenylyltransferase.